A 56-amino-acid chain; its full sequence is Ferredoxin (56 aa).

2 consecutive 4Fe-4S ferredoxin-type domains span residues 2–28 and 29–56; these read AYKI…SQGD and TQFV…PVQE. [4Fe-4S] cluster is bound by residues Cys-9, Cys-12, Cys-15, Cys-19, Cys-38, Cys-41, Cys-44, and Cys-48.

It depends on [4Fe-4S] cluster as a cofactor.

Ferredoxins are iron-sulfur proteins that transfer electrons in a wide variety of metabolic reactions. This Clostridium perfringens (strain 13 / Type A) protein is Ferredoxin (fer).